A 304-amino-acid polypeptide reads, in one-letter code: Proline dehydrogenase 2 (304 aa).

Substrate is bound at residue Lys97. The active site involves Asp131. 2 residues coordinate FAD: Met132 and Gln160. Arg181 is an active-site residue. Residues 184–186 and 223–224 each bind FAD; these read KGA and TH. Residue 285-286 participates in substrate binding; it reads RR.

The protein belongs to the proline dehydrogenase family. The cofactor is FAD.

The enzyme catalyses L-proline + a quinone = (S)-1-pyrroline-5-carboxylate + a quinol + H(+). It participates in amino-acid degradation; L-proline degradation into L-glutamate; L-glutamate from L-proline: step 1/2. In terms of biological role, converts proline to delta-1-pyrroline-5-carboxylate. This is Proline dehydrogenase 2 from Bacillus subtilis subsp. natto.